The sequence spans 253 residues: 28 kDa inner dynein arm light chain, axonemal (253 aa).

Residues 19–44 (TSKDKGKGAKGTPGKKGALPPVEQKP) are disordered. The stretch at 160–239 (IRKALQTEQG…LKQQLETFLV (80 aa)) forms a coiled coil.

This sequence belongs to the inner dynein arm light chain family.

Its subcellular location is the cytoplasm. It localises to the cytoskeleton. The protein resides in the flagellum axoneme. In terms of biological role, plays a dynamic role in flagellar motility. May be necessary for stable assembly of a subset of inner dynein arms or for the binding of these arms to the outer doublet microtubules of the axoneme. In Chlamydomonas reinhardtii (Chlamydomonas smithii), this protein is 28 kDa inner dynein arm light chain, axonemal (IDA4).